A 689-amino-acid chain; its full sequence is uncharacterized protein (689 aa).

4 disordered regions span residues L121 to S206, A286 to N305, N322 to H414, and A552 to D611. The span at S133–S158 shows a compositional bias: low complexity. The span at N322–T380 shows a compositional bias: polar residues. Low complexity-rich tracts occupy residues P381–S411 and P560–H572.

It is found in the cytoplasm. This is an uncharacterized protein from Schizosaccharomyces pombe (strain 972 / ATCC 24843) (Fission yeast).